Consider the following 677-residue polypeptide: Secretogranin-1 (677 aa).

An N-terminal signal peptide occupies residues M1–S20. The cysteines at positions 36 and 57 are disulfide-linked. Composition is skewed to basic and acidic residues over residues S64–S100 and A118–E136. Positions S64 to A463 are disordered. T79 carries the post-translational modification Phosphothreonine. Residues S93, S99, and S100 each carry the phosphoserine modification. S93 carries O-linked (Xyl...) (chondroitin sulfate) serine glycosylation. An O-glycosylated at one site region spans residues T116–T120. The residue at position 130 (S130) is a Phosphoserine; by FAM20C. The residue at position 149 (S149) is a Phosphoserine. Composition is skewed to basic and acidic residues over residues E150 to R162, N172 to E190, and N200 to S236. A Phosphoserine modification is found at S183. At S225 the chain carries Phosphoserine; by FAM20C. S239 carries an O-linked (Xyl...) (chondroitin sulfate) serine glycan. Residues S259 and S263 each carry the phosphoserine modification. Residues E262–S272 are compositionally biased toward acidic residues. Over residues R277–R287 the composition is skewed to basic residues. Residues S293, S294, S311, and S335 each carry the phosphoserine modification. A Sulfotyrosine modification is found at Y341. Residues W359 to A372 show a composition bias toward basic and acidic residues. A phosphoserine; by FAM20C mark is found at S367, S377, and S380. 2 stretches are compositionally biased toward basic and acidic residues: residues E384–K415 and D433–K455. Residue Y401 is modified to Phosphotyrosine. S405 is subject to Phosphoserine. Position 474 is a sulfotyrosine (Y474). The segment at G475–A512 is disordered. A compositionally biased stretch (basic and acidic residues) spans Q490 to D503. 2 positions are modified to phosphoserine: S533 and S534. Sulfotyrosine is present on Y566. At S617 the chain carries Phosphoserine. Residues D622 to K653 form a disordered region. The residue at position 624 (Y624) is a Sulfotyrosine. 2 positions are modified to phosphoserine: S626 and S631. Residues Q634–K653 show a composition bias toward basic and acidic residues.

Belongs to the chromogranin/secretogranin protein family. Interacts with ITPR1 in the secretory granules. In terms of processing, extensively processed by limited proteolysis at conserved basic residues. Alternative processing are seen in different tissues. O-glycosylated. In terms of tissue distribution, detected in cerebrospinal fluid and urine (at protein level). Expressed in the adrenal medulla, and in pheochromocytoma. Not expressed in liver.

Its subcellular location is the secreted. Functionally, secretogranin-1 is a neuroendocrine secretory granule protein, which may be the precursor for other biologically active peptides. The protein is Secretogranin-1 (CHGB) of Homo sapiens (Human).